The primary structure comprises 157 residues: MATLLCDLQERSAKVERARHWDSKQGSSNSDVASGGSEVAGNSGNNSYLGDDVGWKIYPYRFLQLLQHLEQLQFTIQAPRHARLGISTVRMWSLRPYYNYDSYLEKDLIQPDVPHDSLIWALLRYVGRAVDRWVSRTFQPPRIRPLHANDPPAEASL.

Residues 17 to 43 form a disordered region; the sequence is RARHWDSKQGSSNSDVASGGSEVAGNS.

It functions in the pathway mycotoxin biosynthesis. In terms of biological role, part of the gene clusters that mediate the biosynthesis of AM-toxins, host-selective toxins (HSTs) causing Alternaria blotch on apple, a worldwide distributed disease. AM-toxins are cyclic depsipeptides containing the 3 residues 2-hydroxy-isovaleric acid (2-HIV), dehydroalanine, L-alanine which are common for all 3 AM-toxins I to III. The fourth precursor is L-alpha-amino-methoxyphenyl-valeric acid (L-Amv) for AM-toxin I, L-alpha-amino-phenyl-valeric acid (L-Apv) for AM-toxin II, and L-alpha-amino-hydroxyphenyl-valeric acid (L-Ahv) for AM-toxin III. AM-toxins have two target sites for affecting susceptible apple cells; they cause invagination of the plasma membrane and electrolyte loss and chloroplast disorganization. The non-ribosomal peptide synthetase AMT1 contains 4 catalytic modules and is responsible for activation of each residue in AM-toxin. The aldo-keto reductase AMT2 catalyzes the conversion of 2-keto-isovaleric acid (2-KIV) to 2-hydroxy-isovaleric acid (2-HIV), one of the precursor residues incorporated by AMT1 during AM-toxin biosynthesis, by reduction of its ketone to an alcohol. The cytochrome P450 monooxygenase AMT3 and the thioesterase AMT4 are also important for AM-toxin production, but their exact function within the AM-toxin biosynthesis are not known yet. Up to 21 proteins (including AMT1 to AMT4) are predicted to be involved in AM-toxin biosynthesis since their expression ishighly up-regulated in AM-toxin-producing cultures. The polypeptide is AM-toxin biosynthesis protein 15 (Alternaria alternata (Alternaria rot fungus)).